The sequence spans 45 residues: Host translation inhibitor E66L (45 aa).

Belongs to the asfivirus E66L family.

Its subcellular location is the host endoplasmic reticulum. Functionally, inhibits host protein translation, probably through the EIF2AK2/EIF2S1 signaling pathway. Promotes cell retention in the G0/G1 phase. This Ornithodoros (relapsing fever ticks) protein is Host translation inhibitor E66L.